Consider the following 346-residue polypeptide: Protein RecA (346 aa).

65–72 is a binding site for ATP; the sequence is GPESSGKT.

Belongs to the RecA family.

It is found in the cytoplasm. Its function is as follows. Can catalyze the hydrolysis of ATP in the presence of single-stranded DNA, the ATP-dependent uptake of single-stranded DNA by duplex DNA, and the ATP-dependent hybridization of homologous single-stranded DNAs. It interacts with LexA causing its activation and leading to its autocatalytic cleavage. This is Protein RecA from Pseudomonas aeruginosa (strain UCBPP-PA14).